The following is a 246-amino-acid chain: Ribonuclease PH (246 aa).

Phosphate is bound by residues Arg91 and 129–131 (GTR).

Belongs to the RNase PH family. In terms of assembly, homohexameric ring arranged as a trimer of dimers.

The catalysed reaction is tRNA(n+1) + phosphate = tRNA(n) + a ribonucleoside 5'-diphosphate. Phosphorolytic 3'-5' exoribonuclease that plays an important role in tRNA 3'-end maturation. Removes nucleotide residues following the 3'-CCA terminus of tRNAs; can also add nucleotides to the ends of RNA molecules by using nucleoside diphosphates as substrates, but this may not be physiologically important. Probably plays a role in initiation of 16S rRNA degradation (leading to ribosome degradation) during starvation. The sequence is that of Ribonuclease PH from Burkholderia orbicola (strain MC0-3).